We begin with the raw amino-acid sequence, 187 residues long: uncharacterized protein (187 aa).

It belongs to the isochorismatase family.

This is an uncharacterized protein from Bacillus subtilis (strain 168).